We begin with the raw amino-acid sequence, 312 residues long: Nodulation protein D 2 (312 aa).

The region spanning 6–63 (LDLNLLVALDALMTKRSVTAAARSINLSQPAMSAAIARLRTYFGDDLFTMRGRELIPT) is the HTH lysR-type domain. The H-T-H motif DNA-binding region spans 23–42 (VTAAARSINLSQPAMSAAIA).

It belongs to the LysR transcriptional regulatory family.

Its function is as follows. Represses the expression of the nodABCIJ-nolO-noeI operon. The sequence is that of Nodulation protein D 2 (nodD2) from Sinorhizobium fredii (strain NBRC 101917 / NGR234).